A 221-amino-acid polypeptide reads, in one-letter code: Orotate phosphoribosyltransferase (221 aa).

5-phospho-alpha-D-ribose 1-diphosphate is bound at residue Lys-26. 34–35 (FF) serves as a coordination point for orotate. 5-phospho-alpha-D-ribose 1-diphosphate-binding positions include 72-73 (YK), Arg-98, Lys-99, Lys-102, His-104, and 123-131 (DDVISAGTS). Residues Ser-127 and Arg-155 each contribute to the orotate site.

The protein belongs to the purine/pyrimidine phosphoribosyltransferase family. PyrE subfamily. In terms of assembly, homodimer. Mg(2+) is required as a cofactor.

It carries out the reaction orotidine 5'-phosphate + diphosphate = orotate + 5-phospho-alpha-D-ribose 1-diphosphate. The protein operates within pyrimidine metabolism; UMP biosynthesis via de novo pathway; UMP from orotate: step 1/2. Functionally, catalyzes the transfer of a ribosyl phosphate group from 5-phosphoribose 1-diphosphate to orotate, leading to the formation of orotidine monophosphate (OMP). This chain is Orotate phosphoribosyltransferase, found in Herminiimonas arsenicoxydans.